The chain runs to 81 residues: Costars family protein ABRACL (81 aa).

This sequence belongs to the costars family.

This is Costars family protein ABRACL (abracl) from Xenopus tropicalis (Western clawed frog).